The chain runs to 429 residues: Glutamate-1-semialdehyde 2,1-aminomutase (429 aa).

An N6-(pyridoxal phosphate)lysine modification is found at Lys265.

Belongs to the class-III pyridoxal-phosphate-dependent aminotransferase family. HemL subfamily. Homodimer. Requires pyridoxal 5'-phosphate as cofactor.

The protein resides in the cytoplasm. The catalysed reaction is (S)-4-amino-5-oxopentanoate = 5-aminolevulinate. It functions in the pathway porphyrin-containing compound metabolism; protoporphyrin-IX biosynthesis; 5-aminolevulinate from L-glutamyl-tRNA(Glu): step 2/2. The polypeptide is Glutamate-1-semialdehyde 2,1-aminomutase (Legionella pneumophila subsp. pneumophila (strain Philadelphia 1 / ATCC 33152 / DSM 7513)).